A 594-amino-acid polypeptide reads, in one-letter code: RAS guanyl-releasing protein 2-B (594 aa).

An N-terminal Ras-GEF domain is found at 3–121; the sequence is SSDLDKGLTI…SLIDIESVPS (119 aa). The Ras-GEF domain occupies 149–382; sequence DPAELAEHLT…YQLSLQREPR (234 aa). The segment at 377–403 is disordered; it reads LQREPRARSTQTHAKSPPSPSPPLEEW. 2 EF-hand domains span residues 418–453 and 455–482; these read HIEK…FPYL and AFNE…ASSV. Ca(2+)-binding residues include aspartate 431, aspartate 433, aspartate 435, histidine 437, glutamate 442, aspartate 460, asparagine 462, aspartate 464, lysine 466, and glutamate 471. The Phorbol-ester/DAG-type zinc finger occupies 490–540; it reads IHNFAERTFLRPVSCQHCRNLILGIYKKGLKCKACGITCHKHCRDHLSIEC.

This sequence belongs to the RASGRP family.

It localises to the cytoplasm. Its subcellular location is the cytosol. The protein localises to the cell membrane. The protein resides in the synapse. It is found in the synaptosome. Its function is as follows. Functions as a calcium- and DAG-regulated nucleotide exchange factor specifically activating Rap through the exchange of bound GDP for GTP. May function in cell aggregation and adhesion. This is RAS guanyl-releasing protein 2-B (rasgrp2-b) from Xenopus laevis (African clawed frog).